The chain runs to 210 residues: Protein-L-isoaspartate O-methyltransferase (210 aa).

The active site involves S59.

Belongs to the methyltransferase superfamily. L-isoaspartyl/D-aspartyl protein methyltransferase family.

It is found in the cytoplasm. It catalyses the reaction [protein]-L-isoaspartate + S-adenosyl-L-methionine = [protein]-L-isoaspartate alpha-methyl ester + S-adenosyl-L-homocysteine. Its function is as follows. Catalyzes the methyl esterification of L-isoaspartyl residues in peptides and proteins that result from spontaneous decomposition of normal L-aspartyl and L-asparaginyl residues. It plays a role in the repair and/or degradation of damaged proteins. The protein is Protein-L-isoaspartate O-methyltransferase of Nitratidesulfovibrio vulgaris (strain ATCC 29579 / DSM 644 / CCUG 34227 / NCIMB 8303 / VKM B-1760 / Hildenborough) (Desulfovibrio vulgaris).